Here is a 133-residue protein sequence, read N- to C-terminus: Ribosome-binding factor A (133 aa).

Belongs to the RbfA family. In terms of assembly, monomer. Binds 30S ribosomal subunits, but not 50S ribosomal subunits or 70S ribosomes.

The protein resides in the cytoplasm. One of several proteins that assist in the late maturation steps of the functional core of the 30S ribosomal subunit. Associates with free 30S ribosomal subunits (but not with 30S subunits that are part of 70S ribosomes or polysomes). Required for efficient processing of 16S rRNA. May interact with the 5'-terminal helix region of 16S rRNA. The polypeptide is Ribosome-binding factor A (Acinetobacter baumannii (strain ACICU)).